The following is a 339-amino-acid chain: Ribonucleoside-diphosphate reductase subunit beta (339 aa).

2 residues coordinate Fe cation: aspartate 87 and histidine 121. Tyrosine 125 is an active-site residue. Histidine 215 lines the Fe cation pocket.

This sequence belongs to the ribonucleoside diphosphate reductase small chain family. Tetramer of two alpha and two beta subunits. It depends on Fe cation as a cofactor.

The catalysed reaction is a 2'-deoxyribonucleoside 5'-diphosphate + [thioredoxin]-disulfide + H2O = a ribonucleoside 5'-diphosphate + [thioredoxin]-dithiol. In terms of biological role, provides the precursors necessary for DNA synthesis. Catalyzes the biosynthesis of deoxyribonucleotides from the corresponding ribonucleotides. This is Ribonucleoside-diphosphate reductase subunit beta (nrdF) from Mycoplasma pneumoniae (strain ATCC 29342 / M129 / Subtype 1) (Mycoplasmoides pneumoniae).